Consider the following 103-residue polypeptide: Signal recognition particle 19 kDa protein (103 aa).

It belongs to the SRP19 family. In terms of assembly, part of the signal recognition particle protein translocation system, which is composed of SRP and FtsY. Archaeal SRP consists of a 7S RNA molecule of 300 nucleotides and two protein subunits: SRP54 and SRP19.

It is found in the cytoplasm. Involved in targeting and insertion of nascent membrane proteins into the cytoplasmic membrane. Binds directly to 7S RNA and mediates binding of the 54 kDa subunit of the SRP. The sequence is that of Signal recognition particle 19 kDa protein from Methanopyrus kandleri (strain AV19 / DSM 6324 / JCM 9639 / NBRC 100938).